The following is a 197-amino-acid chain: Imidazoleglycerol-phosphate dehydratase (197 aa).

The protein belongs to the imidazoleglycerol-phosphate dehydratase family.

The protein localises to the cytoplasm. The catalysed reaction is D-erythro-1-(imidazol-4-yl)glycerol 3-phosphate = 3-(imidazol-4-yl)-2-oxopropyl phosphate + H2O. It participates in amino-acid biosynthesis; L-histidine biosynthesis; L-histidine from 5-phospho-alpha-D-ribose 1-diphosphate: step 6/9. This chain is Imidazoleglycerol-phosphate dehydratase, found in Novosphingobium aromaticivorans (strain ATCC 700278 / DSM 12444 / CCUG 56034 / CIP 105152 / NBRC 16084 / F199).